The sequence spans 700 residues: Elongation factor G (700 aa).

Positions 10–286 (NKVRNIGIMA…AVIDYLPNPL (277 aa)) constitute a tr-type G domain. GTP is bound by residues 19-26 (AHIDAGKT), 83-87 (DTPGH), and 137-140 (NKMD).

The protein belongs to the TRAFAC class translation factor GTPase superfamily. Classic translation factor GTPase family. EF-G/EF-2 subfamily.

It localises to the cytoplasm. Its function is as follows. Catalyzes the GTP-dependent ribosomal translocation step during translation elongation. During this step, the ribosome changes from the pre-translocational (PRE) to the post-translocational (POST) state as the newly formed A-site-bound peptidyl-tRNA and P-site-bound deacylated tRNA move to the P and E sites, respectively. Catalyzes the coordinated movement of the two tRNA molecules, the mRNA and conformational changes in the ribosome. The polypeptide is Elongation factor G (Rhodococcus opacus (strain B4)).